The primary structure comprises 151 residues: Large ribosomal subunit protein uL15 (151 aa).

The segment at 1-51 (MPLKIEDLKPTPGSRKPKKRLGRGIGSGLGKTAGKGHKGEKARGRGKIGRT) is disordered. Gly residues predominate over residues 23–33 (RGIGSGLGKTA).

The protein belongs to the universal ribosomal protein uL15 family. As to quaternary structure, part of the 50S ribosomal subunit.

Its function is as follows. Binds to the 23S rRNA. In Petrotoga mobilis (strain DSM 10674 / SJ95), this protein is Large ribosomal subunit protein uL15.